The primary structure comprises 150 residues: UPF0756 membrane protein ECA1265 (150 aa).

The next 4 membrane-spanning stretches (helical) occupy residues methionine 1 to serine 21, tyrosine 51 to glycine 71, phenylalanine 82 to glycine 102, and alanine 127 to isoleucine 147.

It belongs to the UPF0756 family.

Its subcellular location is the cell membrane. This Pectobacterium atrosepticum (strain SCRI 1043 / ATCC BAA-672) (Erwinia carotovora subsp. atroseptica) protein is UPF0756 membrane protein ECA1265.